Consider the following 130-residue polypeptide: Iron-sulfur cluster insertion protein ErpA (130 aa).

Iron-sulfur cluster contacts are provided by Cys-58, Cys-122, and Cys-124.

It belongs to the HesB/IscA family. In terms of assembly, homodimer. Iron-sulfur cluster is required as a cofactor.

Functionally, required for insertion of 4Fe-4S clusters for at least IspG. This chain is Iron-sulfur cluster insertion protein ErpA, found in Stenotrophomonas maltophilia (strain K279a).